Here is a 220-residue protein sequence, read N- to C-terminus: Ribose-5-phosphate isomerase A (220 aa).

Residues 28–31 (TGST), 81–84 (DGAD), and 94–97 (KGGG) each bind substrate. The active-site Proton acceptor is the Glu-103. Substrate is bound at residue Lys-121.

This sequence belongs to the ribose 5-phosphate isomerase family. In terms of assembly, homodimer.

It carries out the reaction aldehydo-D-ribose 5-phosphate = D-ribulose 5-phosphate. It functions in the pathway carbohydrate degradation; pentose phosphate pathway; D-ribose 5-phosphate from D-ribulose 5-phosphate (non-oxidative stage): step 1/1. In terms of biological role, catalyzes the reversible conversion of ribose-5-phosphate to ribulose 5-phosphate. The chain is Ribose-5-phosphate isomerase A from Shewanella putrefaciens (strain CN-32 / ATCC BAA-453).